Consider the following 509-residue polypeptide: MEKAFDQYEVWFVTGAQLLYGGDAVIAVDAHSNEMVNGLNESGKLPVKVVYKGTANSSKEVEAVFKAANNDEKCIGVITWMHTFSPAKMWIHGLQQLKKPLLHLHTQFNKEIPWDTMDMDFMNLNQSAHGDREFGHICTRMRIRRKVVVGYWKDEDTQHKIAVWMRVCAGWADSQDMLIIRFGDQMNNVAVTDGDKVEAEQRMGYHVDYCPASELMKYHKNIKDTDVEALVATYFNEYDHDASLEDKSTEAYQKVWNAAKAELALRAILKAKGAKGFTTNFDDLGQTDGSYFDQIPGLASQRLMAEGYGFGAEGDWKSAALYRTVWVMNQGLSKGCSFLEDYTLNFDGANSAILQSHMLEVCPLIAASKPRLEVHFLGIGIRKSQTARLVFTSKVGSGCTATVVDLGNRFRLIVNDVECIESKPLPKLPVASALWIPMPNFEVGAGAWILAGGTHHSCFSYDLTAEYWEDYAEIAGIEMIRIDKDTTISNFKKELRMNEVYYMLNKALC.

Residues glutamate 313, glutamate 340, histidine 357, and histidine 456 each coordinate Mn(2+).

It belongs to the arabinose isomerase family. The cofactor is Mn(2+).

The catalysed reaction is beta-L-arabinopyranose = L-ribulose. Its pathway is carbohydrate degradation; L-arabinose degradation via L-ribulose; D-xylulose 5-phosphate from L-arabinose (bacterial route): step 1/3. Catalyzes the conversion of L-arabinose to L-ribulose. The sequence is that of L-arabinose isomerase from Phocaeicola vulgatus (strain ATCC 8482 / DSM 1447 / JCM 5826 / CCUG 4940 / NBRC 14291 / NCTC 11154) (Bacteroides vulgatus).